A 78-amino-acid chain; its full sequence is Acyl carrier protein (78 aa).

The Carrier domain maps to 2–77; it reads STIEERVKKI…AAIDYINGHQ (76 aa). S37 carries the post-translational modification O-(pantetheine 4'-phosphoryl)serine.

It belongs to the acyl carrier protein (ACP) family. 4'-phosphopantetheine is transferred from CoA to a specific serine of apo-ACP by AcpS. This modification is essential for activity because fatty acids are bound in thioester linkage to the sulfhydryl of the prosthetic group.

The protein resides in the cytoplasm. It participates in lipid metabolism; fatty acid biosynthesis. In terms of biological role, carrier of the growing fatty acid chain in fatty acid biosynthesis. The chain is Acyl carrier protein from Shigella flexneri.